Consider the following 694-residue polypeptide: NADPH--cytochrome P450 reductase (694 aa).

At 1-8 (MAQLDTLD) the chain is on the lumenal side. The chain crosses the membrane as a helical span at residues 9 to 31 (LVVLAVLLVGSVAYFTKGTYWAV). Topologically, residues 32–694 (AKDPYASTGP…RGRYQEDVWS (663 aa)) are cytoplasmic. The region spanning 66-220 (CVIFYGSQTG…DFLAWKEPMW (155 aa)) is the Flavodoxin-like domain. Residues 72–77 (SQTGTA), 123–126 (ATYG), 168–177 (LGNNTYEHYN), and aspartate 203 contribute to the FMN site. Residues 276-537 (HNPFIAPIAE…HVRHSNFKLP (262 aa)) enclose the FAD-binding FR-type domain. Arginine 295 serves as a coordination point for NADP(+). Residues 450 to 453 (RYYS), 468 to 470 (TAV), and 485 to 488 (GVTT) contribute to the FAD site. NADP(+)-binding positions include threonine 551, 613-614 (SR), 619-623 (KVYVQ), and glutamate 655. FAD is bound at residue tryptophan 693.

This sequence belongs to the NADPH--cytochrome P450 reductase family. The protein in the N-terminal section; belongs to the flavodoxin family. It in the C-terminal section; belongs to the flavoprotein pyridine nucleotide cytochrome reductase family. It depends on FAD as a cofactor. FMN is required as a cofactor.

It is found in the endoplasmic reticulum membrane. The protein resides in the mitochondrion outer membrane. It localises to the cell membrane. The catalysed reaction is 2 oxidized [cytochrome P450] + NADPH = 2 reduced [cytochrome P450] + NADP(+) + H(+). In terms of biological role, this enzyme is required for electron transfer from NADP to cytochrome P450 in microsomes. It can also provide electron transfer to heme oxygenase and cytochrome B5. Involved in ergosterol biosynthesis. This chain is NADPH--cytochrome P450 reductase, found in Aspergillus niger.